Here is a 437-residue protein sequence, read N- to C-terminus: Histidinol dehydrogenase (437 aa).

Residues tyrosine 137, glutamine 199, and asparagine 222 each coordinate NAD(+). Residues serine 245, glutamine 267, and histidine 270 each contribute to the substrate site. Zn(2+)-binding residues include glutamine 267 and histidine 270. Catalysis depends on proton acceptor residues glutamate 335 and histidine 336. Positions 336, 369, 423, and 428 each coordinate substrate. Residue aspartate 369 participates in Zn(2+) binding. Histidine 428 provides a ligand contact to Zn(2+).

This sequence belongs to the histidinol dehydrogenase family. Zn(2+) serves as cofactor.

It catalyses the reaction L-histidinol + 2 NAD(+) + H2O = L-histidine + 2 NADH + 3 H(+). The protein operates within amino-acid biosynthesis; L-histidine biosynthesis; L-histidine from 5-phospho-alpha-D-ribose 1-diphosphate: step 9/9. Its function is as follows. Catalyzes the sequential NAD-dependent oxidations of L-histidinol to L-histidinaldehyde and then to L-histidine. The protein is Histidinol dehydrogenase of Parasynechococcus marenigrum (strain WH8102).